A 185-amino-acid chain; its full sequence is ATP-dependent protease subunit HslV (185 aa).

Thr-2 is an active-site residue. Gly-157, Cys-160, and Thr-163 together coordinate Na(+).

The protein belongs to the peptidase T1B family. HslV subfamily. A double ring-shaped homohexamer of HslV is capped on each side by a ring-shaped HslU homohexamer. The assembly of the HslU/HslV complex is dependent on binding of ATP.

The protein resides in the cytoplasm. It catalyses the reaction ATP-dependent cleavage of peptide bonds with broad specificity.. Its activity is regulated as follows. Allosterically activated by HslU binding. Protease subunit of a proteasome-like degradation complex believed to be a general protein degrading machinery. This Idiomarina loihiensis (strain ATCC BAA-735 / DSM 15497 / L2-TR) protein is ATP-dependent protease subunit HslV.